A 222-amino-acid chain; its full sequence is MTSGESKTSLKNAYPAAKKLLPKVEEEGEAEEYCTPGAFELERLFWKGSPQYTHVNEVWPKLYIGDEATALDRYGLQKAGFTHVLNAAHGRWNVDTGPDYYRDMAIEYHGVEADDLPTFDLSIFFYPAAAFIDAALRYEHSKILVHCAMGRSRSATLVLAYLMIHRNMTLVDAIRQVAKNRCVLPNRGFLKQLRELDKQLVQQRRGAQHRGEAGEKAGEKEP.

Positions 54-202 (HVNEVWPKLY…LRELDKQLVQ (149 aa)) constitute a Tyrosine-protein phosphatase domain. 146–153 (HCAMGRSR) contributes to the substrate binding site. Cysteine 147 acts as the Phosphocysteine intermediate in catalysis. The segment at 201–222 (VQQRRGAQHRGEAGEKAGEKEP) is disordered. The segment covering 209–222 (HRGEAGEKAGEKEP) has biased composition (basic and acidic residues).

The protein belongs to the protein-tyrosine phosphatase family. Non-receptor class dual specificity subfamily. Homodimer. Interacts with PRKAA2.

The protein localises to the cytoplasm. The protein resides in the nucleus. It carries out the reaction O-phospho-L-tyrosyl-[protein] + H2O = L-tyrosyl-[protein] + phosphate. The enzyme catalyses O-phospho-L-seryl-[protein] + H2O = L-seryl-[protein] + phosphate. The catalysed reaction is O-phospho-L-threonyl-[protein] + H2O = L-threonyl-[protein] + phosphate. Functionally, dual specificity phosphatase able to dephosphorylate phosphotyrosine, phosphoserine and phosphothreonine residues within the same substrate, with a preference for phosphotyrosine as a substrate. Involved in the modulation of intracellular signaling cascades. In skeletal muscle regulates systemic glucose homeostasis by activating, AMPK, an energy sensor protein kinase. Affects MAP kinase signaling though modulation of the MAPK1/2 cascade in skeletal muscle promoting muscle cell differentiation, development and atrophy. The polypeptide is Dual specificity phosphatase 29 (DUSP29) (Sus scrofa (Pig)).